Reading from the N-terminus, the 66-residue chain is Large ribosomal subunit protein bL35 (66 aa).

The interval 20–40 (GKVKHAQRGKRHGMIKRTKKQ) is disordered.

The protein belongs to the bacterial ribosomal protein bL35 family.

The protein is Large ribosomal subunit protein bL35 of Nitrobacter winogradskyi (strain ATCC 25391 / DSM 10237 / CIP 104748 / NCIMB 11846 / Nb-255).